The sequence spans 560 residues: MKNFKLNRVKYKNIMSVGQNGIDIQLDKVQKTLITGRNGGGKSTMLEAITFGLFGKPFRDVKKGQLINSTNKKELLVELWMEYDEKKYYIKRGQKPNVFEITVNGTRLNESASSKDFQAEFEQLIGMSYASFKQIVVLGTAGYTPFMGLSTPARRKLVEDLLEVGTLAEMDKLNKALIRELNSQNQVLDVKKDSIIQQIKIYNDNVERQKKLTGDNLTRLQNMYDDLAKEARTLKSEIEEANERLVNIVLDEDPTDAFNKIGQEAFLIKSKIDSYNKVINMYHEGGLCPTCLSQLSSGDKVVSKIKDKVSECTHSFEQLSTHRDNLKVLVDEYRDNIKTQQSLANDIRNKKQSLIAAVDKAKKVKAAIEKASSEFIDHADEIALLQEELDKIVKTKTNLVMEKYHRGILTDMLKDSGIKGAIIKKYIPLFNKQINHYLKIMEADYVFTLDEEFNETIKSRGREDFSYASFSEGEKARIDIALLFTWRDIASIVSGVSISTLILDEVFDGSFDAEGIKGVANIINSMKNTNVFIISHKDHDPQEYGQHLQMKKVGRFTVMV.

36-43 (GRNGGGKS) serves as a coordination point for ATP.

To phage T5 protein D13 and to yeast RAD52. Consists of two subunits: gp46 and gp47.

Its function is as follows. Exonuclease that plays a role in viral genome replication, DNA recombination, and host DNA degradation. The chain is Exonuclease subunit 2 (46) from Enterobacteria phage T4 (Bacteriophage T4).